A 230-amino-acid chain; its full sequence is Oxygen-evolving enhancer protein 3-2, chloroplastic (230 aa).

The N-terminal 49 residues, 1–49 (MAQAVTSMAGLRGASQAVLEGSLQINGSNRLNISRVSVGSQRTGLVIRA), are a transit peptide targeting the chloroplast. The transit peptide at 50 to 82 (QQNVSVPESSRRSVIGLVAAGLAGGSFVKAVFA) directs the protein to the thylakoid. S125 bears the Phosphoserine mark. Residue T195 is modified to Phosphothreonine. At Y215 the chain carries Phosphotyrosine. S216 carries the post-translational modification Phosphoserine. T218 carries the post-translational modification Phosphothreonine.

This sequence belongs to the PsbQ family.

The protein resides in the plastid. Its subcellular location is the chloroplast thylakoid membrane. In terms of biological role, required for photosystem II assembly/stability and photoautotrophic growth under low light conditions. The polypeptide is Oxygen-evolving enhancer protein 3-2, chloroplastic (PSBQ2) (Arabidopsis thaliana (Mouse-ear cress)).